The primary structure comprises 327 residues: Aldo-keto reductase family 1 member A1 (327 aa).

NADP(+) contacts are provided by residues 13–22 (GQKIPLIGLG), T23, W24, and D47. The active-site Proton donor is Y52. 12 residues coordinate NADP(+): S164, N165, S213, L215, S217, K265, S266, V267, T268, R271, Q274, and N275.

This sequence belongs to the aldo/keto reductase family.

The protein localises to the cytoplasm. It localises to the cytosol. Its subcellular location is the apical cell membrane. It carries out the reaction a primary alcohol + NADP(+) = an aldehyde + NADPH + H(+). It catalyses the reaction S-nitroso-CoA + NADPH + H(+) = sulfinamide-CoA + NADP(+). The enzyme catalyses S-nitrosoglutathione + NADPH + H(+) = S-(hydroxysulfenamide)glutathione + NADP(+). Catalyzes the NADPH-dependent reduction of a wide variety of carbonyl-containing compounds to their corresponding alcohols. Displays enzymatic activity towards endogenous metabolites such as aromatic and aliphatic aldehydes, ketones, monosaccharides and bile acids. Acts as an aldehyde-detoxification enzyme. Also acts as an inhibitor of protein S-nitrosylation by mediating degradation of S-nitroso-coenzyme A (S-nitroso-CoA), a cofactor required to S-nitrosylate proteins. Also acts as a S-nitroso-glutathione reductase by catalyzing the NADPH-dependent reduction of S-nitrosoglutathione. Displays no reductase activity towards retinoids. This chain is Aldo-keto reductase family 1 member A1 (AKR1A1), found in Gallus gallus (Chicken).